A 434-amino-acid chain; its full sequence is F-box/LRR-repeat protein 21 (434 aa).

Positions 39-85 constitute an F-box domain; sequence LLDWGNLPHHVVLRIFQYLPLIDRARASSVCRRWNEVFHIPDLWRKF. LRR repeat units follow at residues 187-213, 214-239, 242-265, 322-347, 349-374, and 375-400; these read DTPV…KMSS, CPHV…ALNY, LSDK…RIDV, GRSV…VVCA, GIQV…GLSE, and CEVS…SIME.

As to quaternary structure, part of the SCF (SKP1-CUL1-F-box) E3 ubiquitin-protein ligase complex SCF(FBXL21) composed of CUL1, SKP1, RBX1 and FBXL21. Interacts with CRY1 and CRY2.

The protein localises to the cytoplasm. It localises to the cytosol. Its subcellular location is the nucleus. It participates in protein modification; protein ubiquitination. In terms of biological role, substrate-recognition component of the SCF(FBXL21) E3 ubiquitin ligase complex involved in circadian rhythm function. Plays a key role in the maintenance of both the speed and the robustness of the circadian clock oscillation. The SCF(FBXL21) complex mainly acts in the cytosol and mediates ubiquitination of CRY proteins (CRY1 and CRY2), leading to CRY proteins stabilization. The SCF(FBXL21) complex counteracts the activity of the SCF(FBXL3) complex and protects CRY proteins from degradation. Involved in the hypothalamic suprachiasmatic nucleus (SCN) clock regulating temporal organization of the daily activities. The sequence is that of F-box/LRR-repeat protein 21 (FBXL21) from Bos taurus (Bovine).